We begin with the raw amino-acid sequence, 481 residues long: Aspartyl/glutamyl-tRNA(Asn/Gln) amidotransferase subunit B (481 aa).

This sequence belongs to the GatB/GatE family. GatB subfamily. In terms of assembly, heterotrimer of A, B and C subunits.

The catalysed reaction is L-glutamyl-tRNA(Gln) + L-glutamine + ATP + H2O = L-glutaminyl-tRNA(Gln) + L-glutamate + ADP + phosphate + H(+). It carries out the reaction L-aspartyl-tRNA(Asn) + L-glutamine + ATP + H2O = L-asparaginyl-tRNA(Asn) + L-glutamate + ADP + phosphate + 2 H(+). Allows the formation of correctly charged Asn-tRNA(Asn) or Gln-tRNA(Gln) through the transamidation of misacylated Asp-tRNA(Asn) or Glu-tRNA(Gln) in organisms which lack either or both of asparaginyl-tRNA or glutaminyl-tRNA synthetases. The reaction takes place in the presence of glutamine and ATP through an activated phospho-Asp-tRNA(Asn) or phospho-Glu-tRNA(Gln). In Pseudomonas paraeruginosa (strain DSM 24068 / PA7) (Pseudomonas aeruginosa (strain PA7)), this protein is Aspartyl/glutamyl-tRNA(Asn/Gln) amidotransferase subunit B.